The sequence spans 176 residues: ATP-dependent protease subunit HslV (176 aa).

Threonine 6 is an active-site residue. Glycine 161, cysteine 164, and threonine 167 together coordinate Na(+).

It belongs to the peptidase T1B family. HslV subfamily. In terms of assembly, a double ring-shaped homohexamer of HslV is capped on each side by a ring-shaped HslU homohexamer. The assembly of the HslU/HslV complex is dependent on binding of ATP.

The protein resides in the cytoplasm. It carries out the reaction ATP-dependent cleavage of peptide bonds with broad specificity.. With respect to regulation, allosterically activated by HslU binding. In terms of biological role, protease subunit of a proteasome-like degradation complex believed to be a general protein degrading machinery. The protein is ATP-dependent protease subunit HslV of Thermotoga sp. (strain RQ2).